The chain runs to 358 residues: uncharacterized protein (358 aa).

This sequence belongs to the serpin family. Poxviruses subfamily.

This is an uncharacterized protein from Fowlpox virus (strain NVSL) (FPV).